A 274-amino-acid chain; its full sequence is Transcription factor Ovo-like 2 (274 aa).

Basic residues predominate over residues 1–11 (MPKVFLVKRRS). A disordered region spans residues 1-88 (MPKVFLVKRR…ETPELHDAQG (88 aa)). Basic and acidic residues predominate over residues 18–29 (SWDELPDDKRAD). Residues 50–74 (DGGSSSGCSSSAGEPGGAESSSSPR) are compositionally biased toward low complexity. C2H2-type zinc fingers lie at residues 118 to 140 (HNCD…LKCH), 146 to 168 (HLCT…VRTH), 174 to 197 (YKCE…KKIH), and 213 to 236 (YVCE…NSDH). A Phosphoserine modification is found at Ser-268.

It belongs to the krueppel C2H2-type zinc-finger protein family. Interacts (via zinc-finger domains) with CEBPA (via bZIP domain); the interaction inhibits the transcription factor activity of CEBPA and is required to repress adipogenesis. As to expression, expressed highly in testis, specifically in spermatocytes. Expressed also in skin and at lower levels in the ovary. Expressed in adipose tissues. Expression is lower than in testis and a relatively higher expression level is detected in the stromal vascular fraction (SVF) than in fat cells themselves.

The protein localises to the nucleus. Functionally, zinc-finger transcription repressor factor. Plays a critical role in maintaining the identity of epithelial lineages by suppressing epithelial-to mesenchymal transition (EMT) mainly through the repression of ZEB1, an EMT inducer. Positively regulates neuronal differentiation. Suppresses cell cycling and terminal differentiation of keratinocytes by directly repressing MYC and NOTCH1. Important for the correct development of primordial germ cells in embryos. Plays dual functions in thermogenesis and adipogenesis to maintain energy balance. Essential for brown/beige adipose tissue-mediated thermogenesis, is necessary for the development of brown adipocytes. In white adipose tissues, limits adipogenesis by blocking CEBPA binding to its transcriptional targets and inhibiting its transcription factor activity. This Mus musculus (Mouse) protein is Transcription factor Ovo-like 2.